The primary structure comprises 953 residues: Protein translocase subunit SecA (953 aa).

Residues glutamine 84, 102 to 106 (GEGKT), and aspartate 491 each bind ATP. The interval 832–953 (EPEPAPEQPS…RAEAKKNKRR (122 aa)) is disordered. The span at 841-865 (SVPVSVSRSAEPTPDLQAAAEAAAA) shows a compositional bias: low complexity. A compositionally biased stretch (basic and acidic residues) spans 898-907 (KGLDAPEKQR). A compositionally biased stretch (polar residues) spans 908–934 (LNYSGPTEQGGVQTTSESAGEQGNGTS). A compositionally biased stretch (basic and acidic residues) spans 940–953 (RAAARAEAKKNKRR).

The protein belongs to the SecA family. Monomer and homodimer. Part of the essential Sec protein translocation apparatus which comprises SecA, SecYEG and auxiliary proteins SecDF. Other proteins may also be involved.

The protein localises to the cell membrane. Its subcellular location is the cytoplasm. The enzyme catalyses ATP + H2O + cellular proteinSide 1 = ADP + phosphate + cellular proteinSide 2.. Part of the Sec protein translocase complex. Interacts with the SecYEG preprotein conducting channel. Has a central role in coupling the hydrolysis of ATP to the transfer of proteins into and across the cell membrane, serving as an ATP-driven molecular motor driving the stepwise translocation of polypeptide chains across the membrane. This is Protein translocase subunit SecA from Saccharopolyspora erythraea (strain ATCC 11635 / DSM 40517 / JCM 4748 / NBRC 13426 / NCIMB 8594 / NRRL 2338).